The following is a 901-amino-acid chain: Probable dipeptidyl-aminopeptidase B (901 aa).

The segment covering Met-1–Thr-22 has biased composition (low complexity). Residues Met-1–Gln-67 are disordered. The Cytoplasmic segment spans residues Met-1–Arg-76. Residues Leu-77–Val-97 form a helical; Signal-anchor for type II membrane protein membrane-spanning segment. The Vacuolar segment spans residues Thr-98–Lys-901. Residues Asn-334 and Asn-625 are each glycosylated (N-linked (GlcNAc...) asparagine). Ser-739 serves as the catalytic Charge relay system. An N-linked (GlcNAc...) asparagine glycan is attached at Asn-793. Catalysis depends on charge relay system residues Asp-816 and His-849.

The protein belongs to the peptidase S9B family.

It is found in the vacuole membrane. The enzyme catalyses Release of an N-terminal dipeptide, Xaa-Yaa-|-Zaa-, from a polypeptide, preferentially when Yaa is Pro, provided Zaa is neither Pro nor hydroxyproline.. In terms of biological role, type IV dipeptidyl-peptidase which removes N-terminal dipeptides sequentially from polypeptides having unsubstituted N-termini provided that the penultimate residue is proline. This is Probable dipeptidyl-aminopeptidase B (dapB) from Aspergillus niger (strain ATCC MYA-4892 / CBS 513.88 / FGSC A1513).